The sequence spans 103 residues: MASSETQPRFGQSVKGLLSDKVTSCSGDVIALTRQVLKGSRSQELLSQAARNMVIQEDAILHSEDSLRKMSIITTHLQYQQEAIQKNVEHSKNLQDQLRHLMK.

It belongs to the BORCS7 family.

It localises to the lysosome membrane. As part of a BORC-like complex may play a role in lysosomes movement and localization at the cell periphery. Associated with the cytosolic face of lysosomes, this complex may couple lysosomes to microtubule plus-end-directed kinesin motor. This chain is BLOC-1-related complex subunit 7, found in Danio rerio (Zebrafish).